The primary structure comprises 70 residues: Large ribosomal subunit protein eL24 (70 aa).

4 residues coordinate Zn(2+): C6, C9, C32, and C36. The C4-type zinc finger occupies 6 to 36; sequence CSYCGRPIPPGYGIMYVRVDGVVLRFCSRRC.

The protein belongs to the eukaryotic ribosomal protein eL24 family. As to quaternary structure, part of the 50S ribosomal subunit. Forms a cluster with proteins L3 and L14. Zn(2+) serves as cofactor.

Functionally, binds to the 23S rRNA. This chain is Large ribosomal subunit protein eL24, found in Caldivirga maquilingensis (strain ATCC 700844 / DSM 13496 / JCM 10307 / IC-167).